Reading from the N-terminus, the 130-residue chain is Ribosome-binding factor A (130 aa).

This sequence belongs to the RbfA family. In terms of assembly, monomer. Binds 30S ribosomal subunits, but not 50S ribosomal subunits or 70S ribosomes.

Its subcellular location is the cytoplasm. One of several proteins that assist in the late maturation steps of the functional core of the 30S ribosomal subunit. Associates with free 30S ribosomal subunits (but not with 30S subunits that are part of 70S ribosomes or polysomes). Required for efficient processing of 16S rRNA. May interact with the 5'-terminal helix region of 16S rRNA. The polypeptide is Ribosome-binding factor A (Prochlorococcus marinus (strain MIT 9215)).